We begin with the raw amino-acid sequence, 416 residues long: Enterobactin exporter EntS (416 aa).

The Cytoplasmic segment spans residues 1–21; that stretch reads MNRQSWLLNLSLLKTHPAFRA. A helical transmembrane segment spans residues 22-42; that stretch reads VFLARFISIVSLGLLGVAVPV. Residues 43–55 lie on the Periplasmic side of the membrane; that stretch reads QIQMMTHSTWQVG. The chain crosses the membrane as a helical span at residues 56–76; sequence LSVTLTGSAMFVGLMVGGVLA. At 77-83 the chain is on the cytoplasmic side; that stretch reads DRYERKK. The helical transmembrane segment at 84–104 threads the bilayer; it reads VILLARGTCGIGFIGLCLNAL. Over 105–109 the chain is Periplasmic; the sequence is LPEPS. Residues 110 to 130 traverse the membrane as a helical segment; sequence LLAIYLLGLWDGFFASLGVTA. At 131–156 the chain is on the cytoplasmic side; that stretch reads LLAATPALVGRENLMQAGAITMLTVR. The chain crosses the membrane as a helical span at residues 157-177; it reads LGSVISPMLGGVLLATGGVAW. A topological domain (periplasmic) is located at residue asparagine 178. The helical transmembrane segment at 179–199 threads the bilayer; that stretch reads YGLAAAGTFITLLPLLSLPAL. Residues 200–218 are Cytoplasmic-facing; that stretch reads PPPPQPREHPLKSLLAAFR. Residues 219 to 239 form a helical membrane-spanning segment; the sequence is FLLSSPLIGGIALLGGLLTMA. At 240–256 the chain is on the periplasmic side; the sequence is SAVRVLYPALAINWHMS. A helical membrane pass occupies residues 257–277; it reads AAQIGLLYAAIPLGAAVGALT. Residues 278–287 lie on the Cytoplasmic side of the membrane; that stretch reads SGQLAHSVRP. A helical membrane pass occupies residues 288–307; sequence GLLMLVSTVGSFLAIGVFGL. Residues 308-313 are Periplasmic-facing; sequence MPVWLL. The chain crosses the membrane as a helical span at residues 314 to 336; it reads GVICLALFGWLSAISSLLQYTLL. Residues 337–356 lie on the Cytoplasmic side of the membrane; the sequence is QTQTPEAMLGRINGLWTAQN. A helical transmembrane segment spans residues 357–377; it reads VTGDAIGAALLGGLGAMMTPV. Alanine 378 is a topological domain (periplasmic). Residues 379–399 form a helical membrane-spanning segment; sequence SASVSGFGLVIVGLLLMLLLG. Topologically, residues 400-416 are cytoplasmic; that stretch reads ELRRFRQPPPVPDGAPL.

Belongs to the major facilitator superfamily. EntS (TC 2.A.1.38) family.

It localises to the cell inner membrane. Component of an export pathway for enterobactin. This Citrobacter koseri (strain ATCC BAA-895 / CDC 4225-83 / SGSC4696) protein is Enterobactin exporter EntS.